A 183-amino-acid polypeptide reads, in one-letter code: Globin-like protein 26 (183 aa).

A disordered region spans residues 1–25 (MGSSTSTPAPPPKKNKPEGRKADNQ). Residue Gly-2 is the site of N-myristoyl glycine attachment. The Nuclear localization signal signature appears at 12 to 18 (PKKNKPE). Residues 26 to 166 (ILNSYQKSIV…VVDQLRFGYS (141 aa)) enclose the Globin domain. Heme is bound by residues His-77 and His-109.

The protein belongs to the globin family. In terms of assembly, homodimer. Occurs in an equilibrium of monomeric and dimeric forms in solution. Detected in the head mesodermal cell. In the tail region, detected in the stomatointestinal and anal depressor muscle cells.

Its subcellular location is the cytoplasm. The protein resides in the nucleus lamina. It is found in the cell membrane. Functionally, plays a role in electron transport. Utilizes the bis-histidyl hexacoordinated complex with iron to transfer electrons to cytochrome c and molecular oxygen. Plays a regulatory role in the periodicity of the defecation cycle under oxidative stress conditions. Not involved in imparting protection against general conditions of oxidative stress. May participate in redox reactions under anaerobic conditions. In Caenorhabditis elegans, this protein is Globin-like protein 26.